The primary structure comprises 204 residues: Large ribosomal subunit protein eL15A (204 aa).

Positions 164–185 are disordered; sequence LTATGKKSRGINKGHKFNNTKA. Residues 169 to 185 are compositionally biased toward basic residues; it reads KKSRGINKGHKFNNTKA.

It belongs to the eukaryotic ribosomal protein eL15 family. In terms of assembly, component of the large ribosomal subunit (LSU). Mature yeast ribosomes consist of a small (40S) and a large (60S) subunit. The 40S small subunit contains 1 molecule of ribosomal RNA (18S rRNA) and 33 different proteins (encoded by 57 genes). The large 60S subunit contains 3 rRNA molecules (25S, 5.8S and 5S rRNA) and 46 different proteins (encoded by 81 genes).

The protein localises to the cytoplasm. Functionally, component of the ribosome, a large ribonucleoprotein complex responsible for the synthesis of proteins in the cell. The small ribosomal subunit (SSU) binds messenger RNAs (mRNAs) and translates the encoded message by selecting cognate aminoacyl-transfer RNA (tRNA) molecules. The large subunit (LSU) contains the ribosomal catalytic site termed the peptidyl transferase center (PTC), which catalyzes the formation of peptide bonds, thereby polymerizing the amino acids delivered by tRNAs into a polypeptide chain. The nascent polypeptides leave the ribosome through a tunnel in the LSU and interact with protein factors that function in enzymatic processing, targeting, and the membrane insertion of nascent chains at the exit of the ribosomal tunnel. The chain is Large ribosomal subunit protein eL15A from Saccharomyces cerevisiae (strain ATCC 204508 / S288c) (Baker's yeast).